The chain runs to 236 residues: Dense granule protein 7 (236 aa).

Residues 1–26 (MARHAIFSALCVLGLVAAALPQFATA) form the signal peptide. The tract at residues 45–106 (DGQAPVDSLR…EVHFRKRGVR (62 aa)) is disordered. Over residues 70–80 (TTSMDKASVES) the composition is skewed to polar residues. Positions 147–236 (AVGMGASYFA…SGEDGEDARQ (90 aa)) are required for dimerization, interactions with liposomes and liposome tubulation. The helical transmembrane segment at 181 to 201 (VGTVLGFAALAAAAAFLGMGL) threads the bilayer. Residues 208–236 (FSPRKNRSRQPALEQEVPESGEDGEDARQ) are disordered. A glycan (N-linked (GlcNAc...) asparagine) is linked at Asn-213. Residues 223-236 (EVPESGEDGEDARQ) show a composition bias toward acidic residues.

It belongs to the Gra7 family. Homodimer. Can form higher order homooligomers in a lipid-stimulated manner. Component of a complex at least composed of ROP18, GRA7 and ROP2. Interacts with ROP5. Interacts with ROP18 in the absence of ROP5. Interacts with mouse IRGA6/IIGP1 in GTP-dependent manner; the interaction results in faster turnover of the GTP-activated IRGA6/IIGP1 oligomer. Interacts with mouse TRAF6 (via N-terminal RING domain); the interaction plays a role in GRA7-induced pro-inflammatory cytokine production in mouse macrophages.

Its subcellular location is the secreted. The protein resides in the parasitophorous vacuole lumen. It is found in the parasitophorous vacuole membrane. It localises to the cytoplasm. The protein localises to the host cytoplasm. Its subcellular location is the cytoplasmic vesicle. The protein resides in the secretory vesicle. Binds lipid bilayers, sequesters host endocytic organelles in the parasitophorous vacuole space, and causes their deformation and remodeling. Plays a role in nutrient acquisition from the host. In complex with ROP18, targets immunity-related GTPases (IRGs) to prevent IRG-mediated parasite killing by mouse cells. Important component within a kinase complex, contributing to phosphorylation of mouse IRGA6/IIGP1, an immunity-related GTPase that protects mice from infection by certain intracellular pathogens, by Toxoplasma gondii ROP5 and ROP18. Induces pro-inflammatory cytokine production in host macrophages. Activates host pro-inflammatory signaling pathways in a MyD88-dependent manner. Triggers generation of reactive oxygen species (ROS) in host cells. Activates MAPK pathway in host cells. Activates host NF-kappa-B signaling pathway by interacting with TRAF6 and modulating the 'Lys-63'-linked polyubiquitination of TRAF6. This is Dense granule protein 7 from Toxoplasma gondii.